Consider the following 343-residue polypeptide: MSNIDKEKAVAAALAQIEKSYGKGSVMKLGQRPNVDIESVSTGSLGLDIALGIGGIPKGRIIEIFGPESSGKTTLTLHLIAEAQKKGGTCAFIDAEHALDPAYAKKLGVNIDELIISQPDTGEQALEIADTLIRSGGIDMIIIDSVAALVPKSEIEGEMGDAQMASQARLMSQALRKLTASINRTNCITVFINQIRMKIGVMFGSPETTTGGNALKFYASVRIDIRRIGSIKDKEEVIGSQTKVKVVKNKVSPPFKTADFDIMYGSGISKEGEIIDLGVKLDIIEKSGSWFSYNSVRIGQGRENVKQYLKDNPKISNEIEKLVREKSSKVTNINFEQEEEVND.

66–73 provides a ligand contact to ATP; it reads GPESSGKT.

Belongs to the RecA family.

The protein resides in the cytoplasm. Can catalyze the hydrolysis of ATP in the presence of single-stranded DNA, the ATP-dependent uptake of single-stranded DNA by duplex DNA, and the ATP-dependent hybridization of homologous single-stranded DNAs. It interacts with LexA causing its activation and leading to its autocatalytic cleavage. This Rickettsia bellii (strain RML369-C) protein is Protein RecA.